The sequence spans 312 residues: Pantothenate kinase (312 aa).

Residue 97–104 (GSVAVGKS) participates in ATP binding.

This sequence belongs to the prokaryotic pantothenate kinase family.

Its subcellular location is the cytoplasm. It catalyses the reaction (R)-pantothenate + ATP = (R)-4'-phosphopantothenate + ADP + H(+). It functions in the pathway cofactor biosynthesis; coenzyme A biosynthesis; CoA from (R)-pantothenate: step 1/5. The sequence is that of Pantothenate kinase from Mycolicibacterium paratuberculosis (strain ATCC BAA-968 / K-10) (Mycobacterium paratuberculosis).